The sequence spans 65 residues: UPF0434 protein BQ10150 (65 aa).

The protein belongs to the UPF0434 family.

This is UPF0434 protein BQ10150 from Bartonella quintana (strain Toulouse) (Rochalimaea quintana).